The primary structure comprises 438 residues: UPF0229 protein R01398 (438 aa).

Residues 55–107 form a disordered region; the sequence is PARGVNEPAFQPDSNSGERRHVLPGNREFAAGDRIPKRGSGGGAGNAGAGTGQ. Positions 93–105 are enriched in gly residues; it reads GSGGGAGNAGAGT.

This sequence belongs to the UPF0229 family.

The protein is UPF0229 protein R01398 of Rhizobium meliloti (strain 1021) (Ensifer meliloti).